A 70-amino-acid polypeptide reads, in one-letter code: ATP synthase subunit c (70 aa).

2 helical membrane passes run 1 to 21 (MNFLAAAIAAGLAAFAASYGN) and 47 to 67 (FIGVGLIEAVPILSIVVSFLI).

The protein belongs to the ATPase C chain family. In terms of assembly, F-type ATPases have 2 components, F(1) - the catalytic core - and F(0) - the membrane proton channel. F(1) has five subunits: alpha(3), beta(3), gamma(1), delta(1), epsilon(1). F(0) has three main subunits: a(1), b(2) and c(10-14). The alpha and beta chains form an alternating ring which encloses part of the gamma chain. F(1) is attached to F(0) by a central stalk formed by the gamma and epsilon chains, while a peripheral stalk is formed by the delta and b chains.

It is found in the cell membrane. Its function is as follows. F(1)F(0) ATP synthase produces ATP from ADP in the presence of a proton or sodium gradient. F-type ATPases consist of two structural domains, F(1) containing the extramembraneous catalytic core and F(0) containing the membrane proton channel, linked together by a central stalk and a peripheral stalk. During catalysis, ATP synthesis in the catalytic domain of F(1) is coupled via a rotary mechanism of the central stalk subunits to proton translocation. Functionally, key component of the F(0) channel; it plays a direct role in translocation across the membrane. A homomeric c-ring of between 10-14 subunits forms the central stalk rotor element with the F(1) delta and epsilon subunits. The chain is ATP synthase subunit c from Latilactobacillus sakei subsp. sakei (strain 23K) (Lactobacillus sakei subsp. sakei).